The primary structure comprises 136 residues: Small ribosomal subunit protein uS9 (136 aa).

The segment at S97–R136 is disordered. Basic and acidic residues predominate over residues P98–A116. A compositionally biased stretch (basic residues) spans K117–R136.

Belongs to the universal ribosomal protein uS9 family.

In Prochlorococcus marinus (strain MIT 9301), this protein is Small ribosomal subunit protein uS9.